The sequence spans 361 residues: Putative pumilio homolog 22 (361 aa).

One can recognise a PUM-HD domain in the interval Arg5–Thr348. Pumilio repeat units lie at residues His27–Asp63 and Leu64–Glu103. Residues Leu104 to Met131 form a Pumilio 3; degenerate repeat. One copy of the Pumilio 4 repeat lies at Leu132–Gly167. Residues Val168 to Leu205 form a Pumilio 5; degenerate repeat. A Pumilio 6; degenerate repeat occupies Arg206–Cys243. Pumilio repeat units lie at residues Gly244–Lys284 and Cys285–Gly319.

The protein localises to the cytoplasm. Sequence-specific RNA-binding protein that regulates translation and mRNA stability by binding the 3'-UTR of target mRNAs. The sequence is that of Putative pumilio homolog 22 (APUM22) from Arabidopsis thaliana (Mouse-ear cress).